Reading from the N-terminus, the 649-residue chain is Protein phosphatase Slingshot homolog 3 (649 aa).

Residues 1-20 (MALVTVSRSPPASGHSTPVG) are compositionally biased toward polar residues. The disordered stretch occupies residues 1–32 (MALVTVSRSPPASGHSTPVGPTQDRVVRRRGR). Alanine 2 is modified (N-acetylalanine). 2 positions are modified to phosphoserine: serine 9 and serine 38. A disordered region spans residues 49 to 90 (LQDGGDSNVASEADSEPMEEPSGEEQPTEDQTDKGQGLQSPW). Over residues 61 to 78 (ADSEPMEEPSGEEQPTED) the composition is skewed to acidic residues. The residue at position 88 (serine 88) is a Phosphoserine. The region spanning 266 to 321 (EKMEQAILAELWQVLDTSDLDSVTSKEIRQALELRLGCPLQQYRDFIDNQMLLLMA) is the DEK-C domain. One can recognise a Tyrosine-protein phosphatase domain in the interval 325–466 (RASRIFPHLY…LRTYQGILTA (142 aa)). Cysteine 410 acts as the Phosphocysteine intermediate in catalysis. 2 stretches are compositionally biased toward low complexity: residues 541 to 551 (LEPSESESTPE) and 608 to 627 (TRAF…GMSS). Disordered regions lie at residues 541–586 (LEPS…KGPW) and 608–649 (TRAF…EDKA). The segment covering 639–649 (SVDDSREEDKA) has biased composition (basic and acidic residues).

It belongs to the protein-tyrosine phosphatase family. As to quaternary structure, does not bind to, or colocalize with, filamentous actin. In terms of tissue distribution, expressed in brain, small intestine and testis. Also expressed at lower levels in heart, kidney, liver, spleen and thymus.

The protein resides in the cytoplasm. The protein localises to the cytoskeleton. It is found in the nucleus. The catalysed reaction is O-phospho-L-tyrosyl-[protein] + H2O = L-tyrosyl-[protein] + phosphate. It catalyses the reaction O-phospho-L-seryl-[protein] + H2O = L-seryl-[protein] + phosphate. It carries out the reaction O-phospho-L-threonyl-[protein] + H2O = L-threonyl-[protein] + phosphate. In terms of biological role, protein phosphatase which may play a role in the regulation of actin filament dynamics. Can dephosphorylate and activate the actin binding/depolymerizing factor cofilin, which subsequently binds to actin filaments and stimulates their disassembly. The polypeptide is Protein phosphatase Slingshot homolog 3 (Ssh3) (Mus musculus (Mouse)).